A 259-amino-acid chain; its full sequence is Putative protein phosphatase (259 aa).

The PPM-type phosphatase domain occupies 8–255; that stretch reads LFASLSKKGP…DNITLNLINL (248 aa).

The catalysed reaction is O-phospho-L-seryl-[protein] + H2O = L-seryl-[protein] + phosphate. The enzyme catalyses O-phospho-L-threonyl-[protein] + H2O = L-threonyl-[protein] + phosphate. The chain is Putative protein phosphatase from Mycoplasma pneumoniae (strain ATCC 29342 / M129 / Subtype 1) (Mycoplasmoides pneumoniae).